Here is a 406-residue protein sequence, read N- to C-terminus: 4-hydroxy-3-methylbut-2-en-1-yl diphosphate synthase (flavodoxin) (406 aa).

[4Fe-4S] cluster-binding residues include Cys297, Cys300, Cys343, and Glu350.

This sequence belongs to the IspG family. Requires [4Fe-4S] cluster as cofactor.

The enzyme catalyses (2E)-4-hydroxy-3-methylbut-2-enyl diphosphate + oxidized [flavodoxin] + H2O + 2 H(+) = 2-C-methyl-D-erythritol 2,4-cyclic diphosphate + reduced [flavodoxin]. The protein operates within isoprenoid biosynthesis; isopentenyl diphosphate biosynthesis via DXP pathway; isopentenyl diphosphate from 1-deoxy-D-xylulose 5-phosphate: step 5/6. In terms of biological role, converts 2C-methyl-D-erythritol 2,4-cyclodiphosphate (ME-2,4cPP) into 1-hydroxy-2-methyl-2-(E)-butenyl 4-diphosphate. This chain is 4-hydroxy-3-methylbut-2-en-1-yl diphosphate synthase (flavodoxin), found in Thermus thermophilus (strain ATCC 27634 / DSM 579 / HB8).